Here is a 191-residue protein sequence, read N- to C-terminus: Protein GrpE (191 aa).

A compositionally biased stretch (basic and acidic residues) spans 1-11 (MTDSSNAHEAE). Disordered stretches follow at residues 1 to 22 (MTDS…DNEI) and 172 to 191 (KVSK…NNNE).

It belongs to the GrpE family. In terms of assembly, homodimer.

It is found in the cytoplasm. Functionally, participates actively in the response to hyperosmotic and heat shock by preventing the aggregation of stress-denatured proteins, in association with DnaK and GrpE. It is the nucleotide exchange factor for DnaK and may function as a thermosensor. Unfolded proteins bind initially to DnaJ; upon interaction with the DnaJ-bound protein, DnaK hydrolyzes its bound ATP, resulting in the formation of a stable complex. GrpE releases ADP from DnaK; ATP binding to DnaK triggers the release of the substrate protein, thus completing the reaction cycle. Several rounds of ATP-dependent interactions between DnaJ, DnaK and GrpE are required for fully efficient folding. This chain is Protein GrpE, found in Chlamydia abortus (strain DSM 27085 / S26/3) (Chlamydophila abortus).